The primary structure comprises 180 residues: ATP-dependent protease subunit HslV (180 aa).

Residue Thr-10 is part of the active site. Residues Gly-165, Cys-168, and Thr-171 each coordinate Na(+).

Belongs to the peptidase T1B family. HslV subfamily. A double ring-shaped homohexamer of HslV is capped on each side by a ring-shaped HslU homohexamer. The assembly of the HslU/HslV complex is dependent on binding of ATP.

It localises to the cytoplasm. The catalysed reaction is ATP-dependent cleavage of peptide bonds with broad specificity.. Its activity is regulated as follows. Allosterically activated by HslU binding. Protease subunit of a proteasome-like degradation complex believed to be a general protein degrading machinery. This chain is ATP-dependent protease subunit HslV, found in Koribacter versatilis (strain Ellin345).